A 330-amino-acid chain; its full sequence is 4-hydroxythreonine-4-phosphate dehydrogenase (330 aa).

2 residues coordinate substrate: His-133 and Thr-134. A divalent metal cation is bound by residues His-163, His-208, and His-263. Substrate contacts are provided by Lys-271, Asn-280, and Arg-289.

Belongs to the PdxA family. In terms of assembly, homodimer. Requires Zn(2+) as cofactor. Mg(2+) is required as a cofactor. Co(2+) serves as cofactor.

It is found in the cytoplasm. It catalyses the reaction 4-(phosphooxy)-L-threonine + NAD(+) = 3-amino-2-oxopropyl phosphate + CO2 + NADH. It participates in cofactor biosynthesis; pyridoxine 5'-phosphate biosynthesis; pyridoxine 5'-phosphate from D-erythrose 4-phosphate: step 4/5. Functionally, catalyzes the NAD(P)-dependent oxidation of 4-(phosphooxy)-L-threonine (HTP) into 2-amino-3-oxo-4-(phosphooxy)butyric acid which spontaneously decarboxylates to form 3-amino-2-oxopropyl phosphate (AHAP). This chain is 4-hydroxythreonine-4-phosphate dehydrogenase, found in Azoarcus sp. (strain BH72).